Consider the following 143-residue polypeptide: Ribosome-binding factor A (143 aa).

Residues 123-143 (DNSLQENYKDSDKETKVEKLR) form a disordered region.

It belongs to the RbfA family. As to quaternary structure, monomer. Binds 30S ribosomal subunits, but not 50S ribosomal subunits or 70S ribosomes.

It is found in the cytoplasm. In terms of biological role, one of several proteins that assist in the late maturation steps of the functional core of the 30S ribosomal subunit. Associates with free 30S ribosomal subunits (but not with 30S subunits that are part of 70S ribosomes or polysomes). Required for efficient processing of 16S rRNA. May interact with the 5'-terminal helix region of 16S rRNA. This chain is Ribosome-binding factor A, found in Francisella philomiragia subsp. philomiragia (strain ATCC 25017 / CCUG 19701 / FSC 153 / O#319-036).